The primary structure comprises 476 residues: MTWETVIGLEIHVQLNTKSKIFSGASTAFGAEPNAHAGVVECALPGVLPVMNREVVEKAIKLGLALDAKINRKNVFDRKNYFYPDLPKGYQISQLDLPIVEHGKLEIVVGDDVKTINVTRAHMEEDAGKSVHEGLNGATGIDLNRAGTPLLEVVSEPEMRSAAEAVAYAKALHSLVTWLNICDGNMAEGSFRVDANVSVRPKGQAEFGTRREIKNLNSFRFLEQAINYEAEAQIEILEDGGKVQQATMLFDPEKGETRVMRLKEDAHDYRYFPDPDLLPVIISDDRLQKAKAEMPELPKEMAARFVADYGVSDYDARLLTASRVQAAYFEEAAKESGQGKLTANWMNGELAATLNKEGMELADSPITAPRLAALVGKIADGTLSSKLAKKAFEAMWAEPEASIAEIIEKHGLQQMTDTGAIEAMVDEVLANNAKAVEQFKSGNEKALNAIVGQVMKASKGKANPAQVQELIKAKLA.

This sequence belongs to the GatB/GatE family. GatB subfamily. As to quaternary structure, heterotrimer of A, B and C subunits.

It catalyses the reaction L-glutamyl-tRNA(Gln) + L-glutamine + ATP + H2O = L-glutaminyl-tRNA(Gln) + L-glutamate + ADP + phosphate + H(+). The enzyme catalyses L-aspartyl-tRNA(Asn) + L-glutamine + ATP + H2O = L-asparaginyl-tRNA(Asn) + L-glutamate + ADP + phosphate + 2 H(+). Its function is as follows. Allows the formation of correctly charged Asn-tRNA(Asn) or Gln-tRNA(Gln) through the transamidation of misacylated Asp-tRNA(Asn) or Glu-tRNA(Gln) in organisms which lack either or both of asparaginyl-tRNA or glutaminyl-tRNA synthetases. The reaction takes place in the presence of glutamine and ATP through an activated phospho-Asp-tRNA(Asn) or phospho-Glu-tRNA(Gln). This is Aspartyl/glutamyl-tRNA(Asn/Gln) amidotransferase subunit B from Neisseria meningitidis serogroup A / serotype 4A (strain DSM 15465 / Z2491).